Reading from the N-terminus, the 80-residue chain is Serine palmitoyltransferase small subunit A-B (80 aa).

Topologically, residues methionine 1–histidine 21 are cytoplasmic. The helical transmembrane segment at valine 22 to leucine 38 threads the bilayer. At glutamate 39–arginine 43 the chain is on the lumenal side. The chain crosses the membrane as a helical span at residues threonine 44–proline 66. The Cytoplasmic segment spans residues glutamine 67–glutamine 80.

This sequence belongs to the SPTSS family. SPTSSA subfamily. In terms of assembly, component of the serine palmitoyltransferase (SPT) complex, which is composed of SPTLC1, SPTLC2 or SPTLC3 and SPTSSA or SPTSSB. The heterodimer consisting of SPTLC1 and SPTLC2/SPTLC3 forms the catalytic core of the enzyme, while SPTSSA or SPTSSB subunits determine substrate specificity. SPT also interacts with ORMDL proteins, especially ORMDL3, which negatively regulate SPT activity in the presence of ceramides.

The protein resides in the endoplasmic reticulum membrane. Its pathway is lipid metabolism; sphingolipid metabolism. Its function is as follows. Component of the serine palmitoyltransferase multisubunit enzyme (SPT) that catalyzes the initial and rate-limiting step in sphingolipid biosynthesis by condensing L-serine and activated acyl-CoA (most commonly palmitoyl-CoA) to form long-chain bases. The SPT complex is composed of SPTLC1, SPTLC2 or SPTLC3 and SPTSSA or SPTSSB. Within this complex, the heterodimer consisting of SPTLC1 and SPTLC2/SPTLC3 forms the catalytic core. Within the SPT complex, SPTSSA stimulates the catalytic activity and plays a role in substrate specificity, which depends upon the overall complex composition. The SPTLC1-SPTLC2-SPTSSA complex shows a strong preference for C16-CoA substrate, while the SPTLC1-SPTLC3-SPTSSA isozyme uses both C14-CoA and C16-CoA as substrates, with a slight preference for C14-CoA. Independently of its action as a SPT component, may be involved in MBOAT7 localization to mitochondria-associated membranes, a membrane bridge between the endoplasmic reticulum and mitochondria, may hence affect MBOAT7-catalyzed incorporation of arachidonic acid into phosphatidylinositol. This is Serine palmitoyltransferase small subunit A-B (sptssa-b) from Xenopus laevis (African clawed frog).